A 91-amino-acid polypeptide reads, in one-letter code: Small ribosomal subunit protein uS19 (91 aa).

This sequence belongs to the universal ribosomal protein uS19 family.

Functionally, protein S19 forms a complex with S13 that binds strongly to the 16S ribosomal RNA. In Metamycoplasma arthritidis (strain 158L3-1) (Mycoplasma arthritidis), this protein is Small ribosomal subunit protein uS19.